A 479-amino-acid chain; its full sequence is NADH-quinone oxidoreductase subunit N 2 (479 aa).

Helical transmembrane passes span 9–29 (WALA…LLIV), 40–60 (LLLW…LMLA), 75–95 (RFAV…FFLS), 110–130 (YVLL…IDLL), 131–151 (SIYV…GFLR), 164–184 (VILG…IYGL), 206–226 (LLLA…AVPF), 238–258 (PTTI…AVIL), 272–292 (WIIV…VALV), 299–319 (LLAY…VAGG), 326–346 (VMLY…AVIM), 371–391 (ALLM…AGFF), 404–424 (GFVA…YFYI), and 449–469 (ATLA…AWFL).

This sequence belongs to the complex I subunit 2 family. In terms of assembly, NDH-1 is composed of 14 different subunits. Subunits NuoA, H, J, K, L, M, N constitute the membrane sector of the complex.

It is found in the cell inner membrane. The catalysed reaction is a quinone + NADH + 5 H(+)(in) = a quinol + NAD(+) + 4 H(+)(out). Functionally, NDH-1 shuttles electrons from NADH, via FMN and iron-sulfur (Fe-S) centers, to quinones in the respiratory chain. The immediate electron acceptor for the enzyme in this species is believed to be ubiquinone. Couples the redox reaction to proton translocation (for every two electrons transferred, four hydrogen ions are translocated across the cytoplasmic membrane), and thus conserves the redox energy in a proton gradient. This Rhizobium meliloti (strain 1021) (Ensifer meliloti) protein is NADH-quinone oxidoreductase subunit N 2.